Here is a 657-residue protein sequence, read N- to C-terminus: Threonine--tRNA ligase (657 aa).

Residues 1–61 (MINVTLPDGS…EGDASVAIIT (61 aa)) form the TGS domain. The tract at residues 244–549 (DHRKLGAQLD…LIENYAGSFP (306 aa)) is catalytic. Residues cysteine 349, histidine 400, and histidine 526 each contribute to the Zn(2+) site.

Belongs to the class-II aminoacyl-tRNA synthetase family. Homodimer. The cofactor is Zn(2+).

The protein resides in the cytoplasm. The enzyme catalyses tRNA(Thr) + L-threonine + ATP = L-threonyl-tRNA(Thr) + AMP + diphosphate + H(+). Its function is as follows. Catalyzes the attachment of threonine to tRNA(Thr) in a two-step reaction: L-threonine is first activated by ATP to form Thr-AMP and then transferred to the acceptor end of tRNA(Thr). Also edits incorrectly charged L-seryl-tRNA(Thr). The sequence is that of Threonine--tRNA ligase from Hyphomonas neptunium (strain ATCC 15444).